The primary structure comprises 248 residues: Small ribosomal subunit protein uS2 (248 aa).

The protein belongs to the universal ribosomal protein uS2 family.

The polypeptide is Small ribosomal subunit protein uS2 (Leptothrix cholodnii (strain ATCC 51168 / LMG 8142 / SP-6) (Leptothrix discophora (strain SP-6))).